We begin with the raw amino-acid sequence, 1761 residues long: 6-methylsalicylic acid synthase AOL_s00215g283 (1761 aa).

A Ketosynthase family 3 (KS3) domain is found at 18–443; that stretch reads QDDIAIIGMA…GTVAHAVIEQ (426 aa). Catalysis depends on for beta-ketoacyl synthase activity residues Cys-190, His-325, and His-367. Positions 554-870 are malonyl-CoA:ACP transacylase (MAT) domain; sequence VWVFSGHGAH…ALGKLHCHGA (317 aa). Ser-641 serves as the catalytic For malonyltransferase activity. The interval 918 to 1038 is N-terminal hotdog fold; that stretch reads HVLLGAKHQV…GHVANNEWSK (121 aa). The interval 918–1187 is dehydratase (DH) domain; sequence HVLLGAKHQV…NGMRFSAVEG (270 aa). The PKS/mFAS DH domain occupies 918–1191; it reads HVLLGAKHQV…FSAVEGTPGA (274 aa). Residue His-950 is the Proton acceptor; for dehydratase activity of the active site. Residues 1050–1191 are C-terminal hotdog fold; that stretch reads LPSVKPSFAT…FSAVEGTPGA (142 aa). Asp-1113 functions as the Proton donor; for dehydratase activity in the catalytic mechanism. The interval 1399–1587 is ketoreductase (KR) domain; it reads GTYLITGGLG…IVSFLWTSWN (189 aa). The disordered stretch occupies residues 1654-1680; the sequence is PRKRAESSGTEAVSKGEVSEKAPVPKS. The 76-residue stretch at 1686–1761 folds into the Carrier domain; the sequence is EYLQNAISEC…HLVKWFEEKI (76 aa). The residue at position 1721 (Ser-1721) is an O-(pantetheine 4'-phosphoryl)serine.

It catalyses the reaction 3 malonyl-CoA + acetyl-CoA + NADPH + 3 H(+) = 6-methylsalicylate + 3 CO2 + NADP(+) + 4 CoA + H2O. It participates in secondary metabolite biosynthesis; terpenoid biosynthesis. In terms of biological role, 6-methylsalicylic acid synthase; part of the gene cluster that mediates the biosynthesis of sesquiterpenyl epoxy-cyclohexenoids (SECs) such as anthrobotrisins and arthrosporols, metabolites that possess a novel hybrid carbon skeleton consisting of a polyketide-derived epoxycyclohexenol combined with a terpenoid-derived monocyclic sesquiterpenol substructure (PKS-PTS hybrid). The SEC pathway plays an important role for fungal soil colonization via decreasing fungal nematode-capturing ability. Within the pathway, the polyketide synthase (PKS) AOL_s00215g283 catalyzes the biosynthesis of 6-methylsalicylic acid (6-MSA) via condensation of 1 acetate and 3 malonate units. AOL_s00215g283 performs a series of programmed reactions including Claisen condensation, dehydration, reduction, and cyclization to yield 6-MSA. The pathway begins with the biosynthesis of 6-methylsalicylic acid (6-MSA), the first precursor of the polyketide-derived epoxycyclohexenol in arthrosporols, by the polyketide synthase (PKS) AOL_s00215g283. The 6-methylsalicylic acid decarboxylase AOL_s00215g281 then catalyzes the decarboxylation of 6-methylsalicylic acid to yield m-cresol. The cytochrome P450 monooxygenase AOL_s00215g282 further oxidizes m-cresol to yield toluquinol. With the assistance of the oxidoreductase AOL_s00215g277, the polyprenyl transferase AOL_s00215g276 catalyzes the farnesylation of toluquinol to produce farnesyl hydroquinone, the hybrid precursor for biosynthesis of SECs. Farnesyl hydroquinone undergoes epoxidation and then subsequent dehydrogenation to form farnesyl epoxy-quinone, the first and simplest SEC. The cytochrome P450 monooxygenase AOL_s00215g278 and the FAD-dependent monooxygenase AOL_s00215g279 might be involved in the oxygenation of the phenol moiety, most likely in the epoxy formation. The cytochrome P450 monooxygenases AOL_s00215g274 and AOL_s00215g280 are involved in specific regional ketone reductions at respectively C-4 and C-1 of farnesyl epoxy-quinone PubMed:33823587. The protein is 6-methylsalicylic acid synthase AOL_s00215g283 of Arthrobotrys oligospora (strain ATCC 24927 / CBS 115.81 / DSM 1491) (Nematode-trapping fungus).